Here is a 273-residue protein sequence, read N- to C-terminus: Putative peptidyl-prolyl cis-trans isomerase Cbf2 (273 aa).

Positions 1–21 (MKKFSLVAAALIAGVALNVNA) are cleaved as a signal peptide. A PpiC domain is found at 131–228 (PARVQAKHIL…FGYHVILKEN (98 aa)).

It carries out the reaction [protein]-peptidylproline (omega=180) = [protein]-peptidylproline (omega=0). The polypeptide is Putative peptidyl-prolyl cis-trans isomerase Cbf2 (cbf2) (Campylobacter jejuni subsp. jejuni serotype O:23/36 (strain 81-176)).